The sequence spans 227 residues: Cytochrome c oxidase subunit 2 (227 aa).

Over 1–14 the chain is Mitochondrial intermembrane; that stretch reads MAHPVQLGLQDATS. Residues 15-45 traverse the membrane as a helical segment; that stretch reads PVMEELVTFHDHALMAMFLISFLILYALSAT. Topologically, residues 46–59 are mitochondrial matrix; sequence LTTKLTNTNITDAQ. A helical transmembrane segment spans residues 60–87; the sequence is EMETIWTILPAVILVLIALPSLRILYMT. The Mitochondrial intermembrane portion of the chain corresponds to 88-227; it reads DEINNPSFTI…IFEMGPVFTL (140 aa). Residues His-161, Cys-196, Glu-198, Cys-200, His-204, and Met-207 each coordinate Cu cation. Glu-198 serves as a coordination point for Mg(2+).

It belongs to the cytochrome c oxidase subunit 2 family. In terms of assembly, component of the cytochrome c oxidase (complex IV, CIV), a multisubunit enzyme composed of 14 subunits. The complex is composed of a catalytic core of 3 subunits MT-CO1, MT-CO2 and MT-CO3, encoded in the mitochondrial DNA, and 11 supernumerary subunits COX4I, COX5A, COX5B, COX6A, COX6B, COX6C, COX7A, COX7B, COX7C, COX8 and NDUFA4, which are encoded in the nuclear genome. The complex exists as a monomer or a dimer and forms supercomplexes (SCs) in the inner mitochondrial membrane with NADH-ubiquinone oxidoreductase (complex I, CI) and ubiquinol-cytochrome c oxidoreductase (cytochrome b-c1 complex, complex III, CIII), resulting in different assemblies (supercomplex SCI(1)III(2)IV(1) and megacomplex MCI(2)III(2)IV(2)). Found in a complex with TMEM177, COA6, COX18, COX20, SCO1 and SCO2. Interacts with TMEM177 in a COX20-dependent manner. Interacts with COX20. Interacts with COX16. It depends on Cu cation as a cofactor.

It localises to the mitochondrion inner membrane. It catalyses the reaction 4 Fe(II)-[cytochrome c] + O2 + 8 H(+)(in) = 4 Fe(III)-[cytochrome c] + 2 H2O + 4 H(+)(out). Functionally, component of the cytochrome c oxidase, the last enzyme in the mitochondrial electron transport chain which drives oxidative phosphorylation. The respiratory chain contains 3 multisubunit complexes succinate dehydrogenase (complex II, CII), ubiquinol-cytochrome c oxidoreductase (cytochrome b-c1 complex, complex III, CIII) and cytochrome c oxidase (complex IV, CIV), that cooperate to transfer electrons derived from NADH and succinate to molecular oxygen, creating an electrochemical gradient over the inner membrane that drives transmembrane transport and the ATP synthase. Cytochrome c oxidase is the component of the respiratory chain that catalyzes the reduction of oxygen to water. Electrons originating from reduced cytochrome c in the intermembrane space (IMS) are transferred via the dinuclear copper A center (CU(A)) of subunit 2 and heme A of subunit 1 to the active site in subunit 1, a binuclear center (BNC) formed by heme A3 and copper B (CU(B)). The BNC reduces molecular oxygen to 2 water molecules using 4 electrons from cytochrome c in the IMS and 4 protons from the mitochondrial matrix. The chain is Cytochrome c oxidase subunit 2 (MT-CO2) from Theropithecus gelada (Gelada baboon).